The chain runs to 143 residues: Granulocyte-macrophage colony-stimulating factor (143 aa).

The signal sequence occupies residues Met-1 to Ser-17. O-linked (GalNAc...) threonine glycosylation occurs at Thr-27. Residues Asn-44 and Asn-54 are each glycosylated (N-linked (GlcNAc...) asparagine). 2 cysteine pairs are disulfide-bonded: Cys-70/Cys-112 and Cys-104/Cys-137.

Belongs to the GM-CSF family. In terms of assembly, monomer. The signaling GM-CSF receptor complex is a dodecamer of two head-to-head hexamers of two alpha, two beta, and two ligand subunits.

It is found in the secreted. Functionally, cytokine that stimulates the growth and differentiation of hematopoietic precursor cells from various lineages, including granulocytes, macrophages, eosinophils and erythrocytes. The protein is Granulocyte-macrophage colony-stimulating factor (CSF2) of Bos taurus (Bovine).